A 314-amino-acid chain; its full sequence is Methionyl-tRNA formyltransferase (314 aa).

112 to 115 (SLLP) contacts (6S)-5,6,7,8-tetrahydrofolate.

This sequence belongs to the Fmt family.

The enzyme catalyses L-methionyl-tRNA(fMet) + (6R)-10-formyltetrahydrofolate = N-formyl-L-methionyl-tRNA(fMet) + (6S)-5,6,7,8-tetrahydrofolate + H(+). Functionally, attaches a formyl group to the free amino group of methionyl-tRNA(fMet). The formyl group appears to play a dual role in the initiator identity of N-formylmethionyl-tRNA by promoting its recognition by IF2 and preventing the misappropriation of this tRNA by the elongation apparatus. The sequence is that of Methionyl-tRNA formyltransferase from Aeromonas salmonicida (strain A449).